Reading from the N-terminus, the 434-residue chain is G2/mitotic-specific cyclin-2 (434 aa).

Belongs to the cyclin family. Cyclin AB subfamily. In terms of assembly, interacts with the CDC2 protein kinase to form a serine/threonine kinase holoenzyme complex also known as maturation promoting factor (MPF). The cyclin subunit imparts substrate specificity to the complex.

Its function is as follows. Essential for the control of the cell cycle at the G2/M (mitosis) transition. This chain is G2/mitotic-specific cyclin-2, found in Medicago sativa subsp. varia (Alfalfa).